The chain runs to 275 residues: Calcyphosin (275 aa).

Positions 59–87 are disordered; sequence PGTTQLTQGPAGRTLGQTQASCPEPRPSM. EF-hand domains follow at residues 107–142, 143–178, 179–214, and 222–258; these read SGIQ…LGLV, LDQA…PMSQ, AREA…RAHP, and TEDE…VSAS. Ca(2+) is bound by residues D120, D122, S124, S126, E131, D156, N158, S160, T162, E167, D192, S194, D196, and D203. S126 carries the phosphoserine; by PKA modification.

As to quaternary structure, monomer. Does not form oligomers in the presence of calcium.

The protein localises to the cytoplasm. In terms of biological role, calcium-binding protein. May play a role in cellular signaling events (Potential). The sequence is that of Calcyphosin from Homo sapiens (Human).